Consider the following 804-residue polypeptide: Probable replication endonuclease from prophage-like region (804 aa).

Active-site O-(5'-phospho-DNA)-tyrosine intermediate residues include tyrosine 498 and tyrosine 502.

This sequence belongs to the phage GPA family.

Its function is as follows. Possible endonuclease which induces a single-strand cut and initiates DNA replication. The polypeptide is Probable replication endonuclease from prophage-like region (Shigella boydii serotype 4 (strain Sb227)).